The chain runs to 341 residues: S-adenosylmethionine:tRNA ribosyltransferase-isomerase (341 aa).

This sequence belongs to the QueA family. In terms of assembly, monomer.

It is found in the cytoplasm. The enzyme catalyses 7-aminomethyl-7-carbaguanosine(34) in tRNA + S-adenosyl-L-methionine = epoxyqueuosine(34) in tRNA + adenine + L-methionine + 2 H(+). Its pathway is tRNA modification; tRNA-queuosine biosynthesis. Its function is as follows. Transfers and isomerizes the ribose moiety from AdoMet to the 7-aminomethyl group of 7-deazaguanine (preQ1-tRNA) to give epoxyqueuosine (oQ-tRNA). This Clostridium botulinum (strain Langeland / NCTC 10281 / Type F) protein is S-adenosylmethionine:tRNA ribosyltransferase-isomerase.